Here is a 542-residue protein sequence, read N- to C-terminus: Membrane protein insertase YidC (542 aa).

Residues 6–26 (NILLIGLLFVSFLLWQQWQAD) form a helical membrane-spanning segment. Over residues 32–41 (VAQTQSSVAP) the composition is skewed to polar residues. Residues 32-57 (VAQTQSSVAPSTVADAHSSDVPDADS) form a disordered region. Helical transmembrane passes span 326–346 (LVVD…LLMF), 350–370 (FVGN…GMLY), 421–441 (GGCL…WVLL), 458–478 (LSVQ…MFIM), and 501–521 (VIFT…WLVG).

This sequence belongs to the OXA1/ALB3/YidC family. Type 1 subfamily. In terms of assembly, interacts with the Sec translocase complex via SecD. Specifically interacts with transmembrane segments of nascent integral membrane proteins during membrane integration.

The protein resides in the cell inner membrane. In terms of biological role, required for the insertion and/or proper folding and/or complex formation of integral membrane proteins into the membrane. Involved in integration of membrane proteins that insert both dependently and independently of the Sec translocase complex, as well as at least some lipoproteins. Aids folding of multispanning membrane proteins. This Shewanella piezotolerans (strain WP3 / JCM 13877) protein is Membrane protein insertase YidC.